The sequence spans 383 residues: Sulfate adenylyltransferase (383 aa).

Belongs to the sulfate adenylyltransferase family.

The enzyme catalyses sulfate + ATP + H(+) = adenosine 5'-phosphosulfate + diphosphate. It participates in sulfur metabolism; hydrogen sulfide biosynthesis; sulfite from sulfate: step 1/3. The chain is Sulfate adenylyltransferase (sat) from Aeropyrum pernix (strain ATCC 700893 / DSM 11879 / JCM 9820 / NBRC 100138 / K1).